The following is a 309-amino-acid chain: Taste receptor type 2 member 31 (309 aa).

Over 1–2 (MT) the chain is Extracellular. The helical transmembrane segment at 3 to 23 (TFIPIIFSSVVVVLFVIGNFA) threads the bilayer. Residues 24–55 (NGFIALVNSIERVKRQKISFADQILTALAVSR) lie on the Cytoplasmic side of the membrane. The chain crosses the membrane as a helical span at residues 56-76 (VGLLWVLLLNWYSTVFNPAFY). The Extracellular segment spans residues 77–100 (SVEVRTTAYNVWAVTGHFSNWLAT). Residues 101-121 (SLSIFYLLKIANFSNLIFLHL) form a helical membrane-spanning segment. Residues 122–126 (KRRVK) lie on the Cytoplasmic side of the membrane. Residues 127-147 (SVILVMLLGPLLFLACQLFVI) form a helical membrane-spanning segment. Over 148-181 (NMKEIVRTKEYEGNLTWKIKLRSAVYLSDATVTT) the chain is Extracellular. N161 carries an N-linked (GlcNAc...) asparagine glycan. The chain crosses the membrane as a helical span at residues 182–202 (LGNLVPFTLTLLCFLLLICSL). At 203 to 229 (CKHLKKMQLHGKGSQDPSTKVHIKALQ) the chain is on the cytoplasmic side. Residues 230-250 (TVIFFLLLCAVYFLSIMISVW) traverse the membrane as a helical segment. Residues 251-259 (SFGSLENKP) are Extracellular-facing. A helical transmembrane segment spans residues 260 to 280 (VFMFCKAIRFSYPSIHPFILI). The Cytoplasmic portion of the chain corresponds to 281–309 (WGNKKLKQTFLSVLRQVRYWVKGEKPSSP).

The protein belongs to the G-protein coupled receptor T2R family. In terms of tissue distribution, expressed in subsets of taste receptor cells of the tongue and exclusively in gustducin-positive cells.

The protein localises to the membrane. Its function is as follows. Receptor that may play a role in the perception of bitterness and is gustducin-linked. May play a role in sensing the chemical composition of the gastrointestinal content. The activity of this receptor may stimulate alpha gustducin, mediate PLC-beta-2 activation and lead to the gating of TRPM5. Activated by the sulfonyl amide sweeteners saccharin and acesulfame K. The protein is Taste receptor type 2 member 31 (TAS2R31) of Homo sapiens (Human).